The sequence spans 107 residues: Nucleoid-associated protein BT_0257 (107 aa).

This sequence belongs to the YbaB/EbfC family. As to quaternary structure, homodimer.

The protein resides in the cytoplasm. It localises to the nucleoid. In terms of biological role, binds to DNA and alters its conformation. May be involved in regulation of gene expression, nucleoid organization and DNA protection. This is Nucleoid-associated protein BT_0257 from Bartonella tribocorum (strain CIP 105476 / IBS 506).